The sequence spans 638 residues: MRRSSVTNRQSLLPLRVQDANRMGLTTPQNKDRQGFGKLSMSKPHSGTSEKKTSFFGKRASNGTARTSQYGAFGGTEKIKDPRPLHDKAFIQQCIRQLCEFLNENGYSQALTVKSLQGPSTKDFLKIFAFIYTFICPNYENPESKFEEEIPRIFKELGYPFALSKSSMYTVGAPHTWPQIVAALVWLIDCVKLCCVLRSENPVFEDPPMGEQSENGIDFNQLFLDYTVRCYDQFMEGRDTFEEYDTDVCIRLKEAYHVDESNLEALQQESRRLMEEIERLEKEKENEPDRLASMRKLKASLQADIQKYQNYLTEIESHSTLLDQRVSSISEELEATELESRAIQQENLRLKNILDNQKYSVADIERIKYEETELQQTIAKLTKDLDEDKQQLWHEELKYAKMKESVETQLSEFHKIGRKVRLIPPTAEFANGYDFQIQCNLDSEQSSLMHYRNKINVPLVEILSQSEGHIASSTNKKMGVEDMVEQLNTLIGEKKNEVKVQKDEAQKLEEIYQQKVEESEEHEKRWISEIESLEKHRQLLESGVNKSLDEAMKDLQKEQQELQLVEHRTEEEMRQVENKLVRVVHAVANHVAVIEKHLEEKRLKVEREYEEFMKEDLLLDLRELLEKYKEKARVLDSL.

The span at 1 to 11 (MRRSSVTNRQS) shows a compositional bias: polar residues. Residues 1 to 55 (MRRSSVTNRQSLLPLRVQDANRMGLTTPQNKDRQGFGKLSMSKPHSGTSEKKTSF) are disordered. 2 coiled-coil regions span residues 249-394 (CIRL…QLWH) and 479-638 (GVED…LDSL).

Belongs to the NDC80/HEC1 family. In terms of assembly, component of the NDC80 complex, which is composed of ndc80, cdca1, spbc24 and spbc25. The NDC80 complex interacts with mis12 and zwint. Interacts with cep57r.

The protein localises to the nucleus. The protein resides in the chromosome. It is found in the centromere. Its subcellular location is the kinetochore. Its function is as follows. Acts as a component of the essential kinetochore-associated NDC80 complex, which is required for chromosome segregation and spindle checkpoint activity. Required for kinetochore integrity and the organization of stable microtubule binding sites in the outer plate of the kinetochore. The NDC80 complex synergistically enhances the affinity of the SKA1 complex for microtubules and may allow the NDC80 complex to track depolymerizing microtubules. May play a role in chromosome congression and may be essential for the end-on attachment of the kinetochores to spindle microtubules. This is Kinetochore protein NDC80 homolog (ndc80) from Xenopus laevis (African clawed frog).